Here is a 907-residue protein sequence, read N- to C-terminus: Leucine-rich repeat-containing G-protein coupled receptor 5 (907 aa).

The signal sequence occupies residues 1–21; sequence MDTSSVGVLLSLPVLLQLAAG. Residues 22–553 are Extracellular-facing; it reads GGSPRPGTLL…SPGPFKLCEY (532 aa). The LRRNT domain occupies 33–64; it reads GCPAHCQCEPDGRMLLRVDCSDLGLSELPSNL. Cystine bridges form between Cys-34–Cys-40 and Cys-38–Cys-52. LRR repeat units follow at residues 44–64, 65–88, 89–112, 114–136, 137–160, 162–184, 185–208, 209–232, 233–256, 257–279, 281–303, 304–327, 328–350, 351–375, 377–396, 397–420, and 421–444; these read GRML…PSNL, SVFT…PLHS, LRFL…AFAG, YSLK…ALQN, LRSL…CFSG, HSLR…AFRS, LSAL…AFGN, LSSL…CFDG, LHSL…VRTL, SNLK…AFVG, PSLI…AFQH, LPEL…LTGT, ASLE…VCDQ, LPNL…VCQK, QKID…TFQQ, LFSL…AFST, and LPSL…GLHG. 2 N-linked (GlcNAc...) asparagine glycosylation sites follow: Asn-63 and Asn-77. An N-linked (GlcNAc...) asparagine glycan is attached at Asn-208. Cys-348 and Cys-373 are oxidised to a cystine. A disulfide bridge connects residues Cys-479 and Cys-541. Asn-500 is a glycosylation site (N-linked (GlcNAc...) asparagine). Residues 554 to 574 form a helical membrane-spanning segment; sequence LFGSWLIRIGVWTIAVLALTC. The stretch at 564 to 585 is one LRR 18 repeat; the sequence is VWTIAVLALTCNALVTSTVFRA. The Cytoplasmic portion of the chain corresponds to 575-593; it reads NALVTSTVFRAAVYISSIK. Residues 594-614 form a helical membrane-spanning segment; that stretch reads LLIGLIAAVNMLMGVSSAVLA. Topologically, residues 615–638 are extracellular; sequence GVDAFTFGSFAQHGAWWEQAVGCQ. Cys-637 and Cys-712 are joined by a disulfide. A helical transmembrane segment spans residues 639–659; the sequence is VVGFLSIFASESSVFLLTLAA. Over 660 to 682 the chain is Cytoplasmic; the sequence is LERGWSVKCSAKFETQTPFPSLR. The helical transmembrane segment at 683–703 threads the bilayer; the sequence is ATLALCALLAGTVAAVPLLGG. At 704–723 the chain is on the extracellular side; it reads SEYSASPLCLPLPFGEPRAT. Residues 724 to 744 form a helical membrane-spanning segment; that stretch reads GYMVALVLLNSLCFLVMTVAY. Over 745 to 767 the chain is Cytoplasmic; it reads TRLYCHLEKGDLESMWDCSMVKH. A helical membrane pass occupies residues 768–788; it reads VALLLFTNCILHCPVAFLSFS. The Extracellular portion of the chain corresponds to 789–802; that stretch reads SLLNLTFISPEVIK. The N-linked (GlcNAc...) asparagine glycan is linked to Asn-792. A helical transmembrane segment spans residues 803–823; it reads FILLVIVPLPACLNPLLYILF. Residues 824-907 lie on the Cytoplasmic side of the membrane; sequence NPHFKEDLGS…LSSVAFVPCL (84 aa).

The protein belongs to the G-protein coupled receptor 1 family. In terms of assembly, identified in a complex composed of RNF43, LGR5 and RSPO1. Also interacts with other R-spondin ligands, including RSPO2, RSPO3 and RSPO4.

It is found in the cell membrane. Its subcellular location is the golgi apparatus. It localises to the trans-Golgi network membrane. In terms of biological role, receptor for R-spondins that potentiates the canonical Wnt signaling pathway and acts as a stem cell marker of the intestinal epithelium and the hair follicle. Upon binding to R-spondins (RSPO1, RSPO2, RSPO3 or RSPO4), associates with phosphorylated LRP6 and frizzled receptors that are activated by extracellular Wnt receptors, triggering the canonical Wnt signaling pathway to increase expression of target genes. In contrast to classical G-protein coupled receptors, does not activate heterotrimeric G-proteins to transduce the signal. Involved in the development and/or maintenance of the adult intestinal stem cells during postembryonic development. This chain is Leucine-rich repeat-containing G-protein coupled receptor 5 (LGR5), found in Bos taurus (Bovine).